Reading from the N-terminus, the 638-residue chain is Chaperone protein HtpG (638 aa).

Residues 1-344 (MQKKETLEFQ…SNDLPLNVSR (344 aa)) are a; substrate-binding. Positions 345–560 (EILQNNENIY…ENDITTQMSK (216 aa)) are b. Residues 561 to 638 (LLISTGQESP…LLLSNIIRLN (78 aa)) form a c region.

This sequence belongs to the heat shock protein 90 family. In terms of assembly, homodimer.

It localises to the cytoplasm. Molecular chaperone. Has ATPase activity. This is Chaperone protein HtpG from Wigglesworthia glossinidia brevipalpis.